Here is a 548-residue protein sequence, read N- to C-terminus: Isocitrate dehydrogenase [NAD(+)] 1, mitochondrial (548 aa).

A mitochondrion-targeting transit peptide spans 1 to 53; sequence MSSLSTLRILHSTAGRRWASYYGIYPKSAACSSSSVAIARFFSTAADRPPKHA. NAD(+) is bound by residues 132–134 and asparagine 153; that span reads TIT. Residues 151-157, arginine 187, tyrosine 194, lysine 266, aspartate 311, and aspartate 335 contribute to the D-threo-isocitrate site; that span reads SPNGAMR. Mg(2+) is bound by residues aspartate 311, aspartate 335, and aspartate 339. NAD(+) is bound by residues 372–377 and asparagine 391; that span reads HGTVSD. Residues 499–534 enclose the EF-hand domain; that stretch reads IDEEAINGLFQKYDKNGDGFIDFEEFTRMLVKMNLA. Residues aspartate 512, asparagine 514, aspartate 516, phenylalanine 518, and glutamate 523 each coordinate Ca(2+).

It belongs to the isocitrate and isopropylmalate dehydrogenases family. Homodimer. Requires Mg(2+) as cofactor. It depends on Mn(2+) as a cofactor.

It localises to the mitochondrion. The enzyme catalyses D-threo-isocitrate + NAD(+) = 2-oxoglutarate + CO2 + NADH. Its activity is regulated as follows. The homodimer exhibits allosteric regulation by isocitrate. Activated by Mn(2+) and Mg(2+). No activation by Na(+), K(+) or Li(+). Inhibited by Co(2+), Cu(2+) and Ni(2+), but not with Ca(2+) in the presence of Mn(2+) or Mg(2+). Competitively inhibited by NADH, but no effect on activity by 1.0 mM citrate. Strongly inhibited by excess ATP, ADP, AMP and alpha-ketoglutarate. Performs an essential role in the oxidative function of the tricarboxylic acid cycle and respiration. Catalyzes the decarboxylation of isocitrate to produce 2-oxoglutarate and generate NADH to provide electrons for energy production. No activity with NADP(+). The chain is Isocitrate dehydrogenase [NAD(+)] 1, mitochondrial from Phaeodactylum tricornutum (strain CCAP 1055/1).